We begin with the raw amino-acid sequence, 319 residues long: MamJ paralog LimJ (319 aa).

2 disordered regions span residues 1-59 (MMME…PAPV) and 145-176 (AAAP…TETE). Over residues 30 to 52 (AALAPAADAEIPASSAPEPAAPI) the composition is skewed to low complexity. Residues 150-164 (PEPEPVPEPEPEPEP) are compositionally biased toward acidic residues.

The protein belongs to the magnetosome MamJ protein family.

The protein resides in the magnetosome. In terms of biological role, regulates the dynamic behavior of MamK filaments; paralog MamJ also promotes MamK turnover. At least one other protein besides MamJ and LimJ is required for MamK turnover. Might connect magnetosomes to MamK filaments. This is MamJ paralog LimJ from Paramagnetospirillum magneticum (strain ATCC 700264 / AMB-1) (Magnetospirillum magneticum).